We begin with the raw amino-acid sequence, 519 residues long: Ribonuclease Y (519 aa).

Residues 6-26 (VPFYLLIFLVGIGLGVLTFWA) form a helical membrane-spanning segment. The 64-residue stretch at 209-272 (TVCTVTIPNE…HIAKMALTEL (64 aa)) folds into the KH domain. The region spanning 335–428 (VLDHSLEVSH…CSAADAISAS (94 aa)) is the HD domain.

It belongs to the RNase Y family.

The protein resides in the cell membrane. Functionally, endoribonuclease that initiates mRNA decay. In Protochlamydia amoebophila (strain UWE25), this protein is Ribonuclease Y.